The following is a 628-amino-acid chain: MALVSAVPLDSRLCLCRTLFGLTHELKAIRRTIPNLGMCRGGKSIAPSMSMSSTTFVSSEDGVPRRIGGHHSNLWDDDSIDSLSTSYEAPSYRERADRLIGEVKDMFHLISVEDGVSTSPLNDLHHRLWMVDSVERLGIDRHFKNETNAGLDHVYSYWTEKGIGRGRESGATDLNSTALGLRTLRLHGYMVSSHVLDHFKNEKGQFTCSAIQTEGEIRDVLNLFRASLIAFPGEKIMDAAEIFSTMYLKDALQKIPPSGLSQEIEYLLEFGWHTNLPRMETRMYIDVFGEDTTFETPYLIRERLLELAKLEFNIFHSLVKRELQSLSRWWKDYGFPEITFSRHRHVEYYTLAACIANDPKHSAFRLGFAKICHMVTILDDIYDTFGTMEELELLTAAFKRWDPSSIECLPDYMKGVYMAVYDNINETAREAQKIQGWDIVSYARKSWEALFDAHMQEAKWISSGYLPTFEEYLENGKVSFGSRLTTLEPMLTLGFPLPPRILQEIDFPSNFNELICAILRLRGDTQCYKADRARGEEASSVSCYMKDHPGITEEDAVNQINALVNNLTKELNSELLRPDSGVPISYKKFYFDIWRVFHYGYKYRDGFSVASIEIKNLVTITVVETVPL.

3 residues coordinate Mg(2+): Asp-379, Asp-383, and Asp-531. The DDXXD motif signature appears at 379–383 (DDIYD).

This sequence belongs to the terpene synthase family. Tpsd subfamily. Mg(2+) serves as cofactor. Mn(2+) is required as a cofactor.

Its subcellular location is the plastid. It is found in the chloroplast. It participates in terpene metabolism; oleoresin biosynthesis. Its pathway is secondary metabolite biosynthesis; terpenoid biosynthesis. Functionally, monoterpene synthase (TPS) involved in the biosynthesis of monoterpene natural products included in conifer oleoresin secretions and volatile emissions; these compounds contribute to biotic and abiotic stress defense against herbivores and pathogens. The polypeptide is Monoterpene synthase like 2, chloroplastic (Pinus banksiana (Jack pine)).